A 117-amino-acid chain; its full sequence is DNA-directed RNA polymerase subunit omega (117 aa).

The protein belongs to the RNA polymerase subunit omega family. The RNAP catalytic core consists of 2 alpha, 1 beta, 1 beta' and 1 omega subunit. When a sigma factor is associated with the core the holoenzyme is formed, which can initiate transcription.

The enzyme catalyses RNA(n) + a ribonucleoside 5'-triphosphate = RNA(n+1) + diphosphate. Functionally, promotes RNA polymerase assembly. Latches the N- and C-terminal regions of the beta' subunit thereby facilitating its interaction with the beta and alpha subunits. This chain is DNA-directed RNA polymerase subunit omega, found in Roseobacter denitrificans (strain ATCC 33942 / OCh 114) (Erythrobacter sp. (strain OCh 114)).